Consider the following 316-residue polypeptide: 4-hydroxy-3-methylbut-2-enyl diphosphate reductase (316 aa).

Cys-12 provides a ligand contact to [4Fe-4S] cluster. His-41 and His-74 together coordinate (2E)-4-hydroxy-3-methylbut-2-enyl diphosphate. Dimethylallyl diphosphate contacts are provided by His-41 and His-74. His-41 and His-74 together coordinate isopentenyl diphosphate. Cys-96 contributes to the [4Fe-4S] cluster binding site. A (2E)-4-hydroxy-3-methylbut-2-enyl diphosphate-binding site is contributed by His-124. Dimethylallyl diphosphate is bound at residue His-124. Residue His-124 coordinates isopentenyl diphosphate. Glu-126 serves as the catalytic Proton donor. Thr-169 is a binding site for (2E)-4-hydroxy-3-methylbut-2-enyl diphosphate. A [4Fe-4S] cluster-binding site is contributed by Cys-199. (2E)-4-hydroxy-3-methylbut-2-enyl diphosphate-binding residues include Ser-227, Ser-228, Asn-229, and Ser-271. Dimethylallyl diphosphate-binding residues include Ser-227, Ser-228, Asn-229, and Ser-271. Isopentenyl diphosphate is bound by residues Ser-227, Ser-228, Asn-229, and Ser-271.

This sequence belongs to the IspH family. [4Fe-4S] cluster serves as cofactor.

The catalysed reaction is isopentenyl diphosphate + 2 oxidized [2Fe-2S]-[ferredoxin] + H2O = (2E)-4-hydroxy-3-methylbut-2-enyl diphosphate + 2 reduced [2Fe-2S]-[ferredoxin] + 2 H(+). It carries out the reaction dimethylallyl diphosphate + 2 oxidized [2Fe-2S]-[ferredoxin] + H2O = (2E)-4-hydroxy-3-methylbut-2-enyl diphosphate + 2 reduced [2Fe-2S]-[ferredoxin] + 2 H(+). Its pathway is isoprenoid biosynthesis; dimethylallyl diphosphate biosynthesis; dimethylallyl diphosphate from (2E)-4-hydroxy-3-methylbutenyl diphosphate: step 1/1. It functions in the pathway isoprenoid biosynthesis; isopentenyl diphosphate biosynthesis via DXP pathway; isopentenyl diphosphate from 1-deoxy-D-xylulose 5-phosphate: step 6/6. In terms of biological role, catalyzes the conversion of 1-hydroxy-2-methyl-2-(E)-butenyl 4-diphosphate (HMBPP) into a mixture of isopentenyl diphosphate (IPP) and dimethylallyl diphosphate (DMAPP). Acts in the terminal step of the DOXP/MEP pathway for isoprenoid precursor biosynthesis. In Xanthomonas axonopodis pv. citri (strain 306), this protein is 4-hydroxy-3-methylbut-2-enyl diphosphate reductase.